Consider the following 220-residue polypeptide: Probable L-serine dehydratase, beta chain (220 aa).

In terms of domain architecture, ACT spans 148–220; that stretch reads AILVVHNDKF…NIIQVTKIAD (73 aa).

Belongs to the iron-sulfur dependent L-serine dehydratase family. In terms of assembly, heterodimer of an alpha chain and a beta chain. It depends on [4Fe-4S] cluster as a cofactor.

It catalyses the reaction L-serine = pyruvate + NH4(+). It functions in the pathway carbohydrate biosynthesis; gluconeogenesis. The protein is Probable L-serine dehydratase, beta chain (sdaAB) of Bacillus subtilis (strain 168).